A 360-amino-acid chain; its full sequence is Threonine synthase (360 aa).

K69 is subject to N6-(pyridoxal phosphate)lysine. Pyridoxal 5'-phosphate contacts are provided by residues N95, 196–200 (GNAGN), and T326.

This sequence belongs to the threonine synthase family. Homodimer. Pyridoxal 5'-phosphate serves as cofactor.

It catalyses the reaction O-phospho-L-homoserine + H2O = L-threonine + phosphate. It functions in the pathway amino-acid biosynthesis; L-threonine biosynthesis; L-threonine from L-aspartate: step 5/5. Catalyzes the gamma-elimination of phosphate from L-phosphohomoserine and the beta-addition of water to produce L-threonine. This is Threonine synthase (thrC) from Mycobacterium leprae (strain TN).